The sequence spans 461 residues: Photosystem II CP43 reaction center protein (461 aa).

Residues 1–2 constitute a propeptide that is removed on maturation; it reads ME. Residue Thr-3 is modified to N-acetylthreonine. Position 3 is a phosphothreonine (Thr-3). The next 5 membrane-spanning stretches (helical) occupy residues 57–81, 122–143, 166–188, 243–263, and 279–300; these read LFEV…PHLA, LLGP…KDRN, KALY…RKIT, KPFA…LSYS, and WFNN…ASQA. A [CaMn4O5] cluster-binding site is contributed by Glu-355. A helical transmembrane segment spans residues 435–459; sequence RARAAAAGFEKGIDRDLEPVLSMTP.

The protein belongs to the PsbB/PsbC family. PsbC subfamily. PSII is composed of 1 copy each of membrane proteins PsbA, PsbB, PsbC, PsbD, PsbE, PsbF, PsbH, PsbI, PsbJ, PsbK, PsbL, PsbM, PsbT, PsbX, PsbY, PsbZ, Psb30/Ycf12, at least 3 peripheral proteins of the oxygen-evolving complex and a large number of cofactors. It forms dimeric complexes. It depends on Binds multiple chlorophylls and provides some of the ligands for the Ca-4Mn-5O cluster of the oxygen-evolving complex. It may also provide a ligand for a Cl- that is required for oxygen evolution. PSII binds additional chlorophylls, carotenoids and specific lipids. as a cofactor.

It is found in the plastid. Its subcellular location is the chloroplast thylakoid membrane. Its function is as follows. One of the components of the core complex of photosystem II (PSII). It binds chlorophyll and helps catalyze the primary light-induced photochemical processes of PSII. PSII is a light-driven water:plastoquinone oxidoreductase, using light energy to abstract electrons from H(2)O, generating O(2) and a proton gradient subsequently used for ATP formation. The chain is Photosystem II CP43 reaction center protein from Ceratophyllum demersum (Rigid hornwort).